Consider the following 337-residue polypeptide: tRNA N6-adenosine threonylcarbamoyltransferase (337 aa).

Residues His-111 and His-115 each coordinate Fe cation. Substrate-binding positions include 134–138 (LVSGG), Asp-167, Gly-180, and Asn-272. Residue Asp-300 participates in Fe cation binding.

It belongs to the KAE1 / TsaD family. It depends on Fe(2+) as a cofactor.

It is found in the cytoplasm. The enzyme catalyses L-threonylcarbamoyladenylate + adenosine(37) in tRNA = N(6)-L-threonylcarbamoyladenosine(37) in tRNA + AMP + H(+). Required for the formation of a threonylcarbamoyl group on adenosine at position 37 (t(6)A37) in tRNAs that read codons beginning with adenine. Is involved in the transfer of the threonylcarbamoyl moiety of threonylcarbamoyl-AMP (TC-AMP) to the N6 group of A37, together with TsaE and TsaB. TsaD likely plays a direct catalytic role in this reaction. In Methylococcus capsulatus (strain ATCC 33009 / NCIMB 11132 / Bath), this protein is tRNA N6-adenosine threonylcarbamoyltransferase.